Consider the following 998-residue polypeptide: Bifunctional glutamine synthetase adenylyltransferase/adenylyl-removing enzyme (998 aa).

Residues 1–487 (MVVTKPATQR…LHAKLFYQPL (487 aa)) form an adenylyl removase region. Residues 492–998 (GPAGLEIRHG…KAVVRKVFGS (507 aa)) are adenylyl transferase.

It belongs to the GlnE family. Mg(2+) is required as a cofactor.

The catalysed reaction is [glutamine synthetase]-O(4)-(5'-adenylyl)-L-tyrosine + phosphate = [glutamine synthetase]-L-tyrosine + ADP. The enzyme catalyses [glutamine synthetase]-L-tyrosine + ATP = [glutamine synthetase]-O(4)-(5'-adenylyl)-L-tyrosine + diphosphate. In terms of biological role, involved in the regulation of glutamine synthetase GlnA, a key enzyme in the process to assimilate ammonia. When cellular nitrogen levels are high, the C-terminal adenylyl transferase (AT) inactivates GlnA by covalent transfer of an adenylyl group from ATP to specific tyrosine residue of GlnA, thus reducing its activity. Conversely, when nitrogen levels are low, the N-terminal adenylyl removase (AR) activates GlnA by removing the adenylyl group by phosphorolysis, increasing its activity. The regulatory region of GlnE binds the signal transduction protein PII (GlnB) which indicates the nitrogen status of the cell. This Mycobacterium avium (strain 104) protein is Bifunctional glutamine synthetase adenylyltransferase/adenylyl-removing enzyme.